Here is a 411-residue protein sequence, read N- to C-terminus: Tyrosine--tRNA ligase (411 aa).

An L-tyrosine-binding site is contributed by Tyr36. The 'HIGH' region motif lies at 41 to 50; the sequence is PTADSLHVGH. 2 residues coordinate L-tyrosine: Tyr172 and Gln176. The 'KMSKS' region motif lies at 232–236; sequence KMGKT. Residue Lys235 coordinates ATP. Residues 344 to 409 enclose the S4 RNA-binding domain; it reads YSIANILVVT…GKKNHIKVII (66 aa).

It belongs to the class-I aminoacyl-tRNA synthetase family. TyrS type 1 subfamily. Homodimer.

The protein localises to the cytoplasm. The enzyme catalyses tRNA(Tyr) + L-tyrosine + ATP = L-tyrosyl-tRNA(Tyr) + AMP + diphosphate + H(+). Functionally, catalyzes the attachment of tyrosine to tRNA(Tyr) in a two-step reaction: tyrosine is first activated by ATP to form Tyr-AMP and then transferred to the acceptor end of tRNA(Tyr). The sequence is that of Tyrosine--tRNA ligase from Malacoplasma penetrans (strain HF-2) (Mycoplasma penetrans).